A 1577-amino-acid chain; its full sequence is MAP kinase-activating death domain protein (1577 aa).

The uDENN domain occupies Tyr-13–Asp-267. Residues Lys-106–Ala-121 show a composition bias toward basic and acidic residues. Residues Lys-106–Ser-166 form a disordered region. Residues Thr-123 to Thr-140 are compositionally biased toward low complexity. A compositionally biased stretch (polar residues) spans Leu-141–Pro-156. Phosphoserine is present on Ser-155. The cDENN domain maps to Arg-288–Lys-428. A dDENN domain is found at Ala-430 to Arg-564. 2 disordered regions span residues Leu-604–Ser-635 and Gln-676–Glu-840. Residues Ser-614–Asp-629 are compositionally biased toward acidic residues. Residues Ser-688 and Ser-691 each carry the phosphoserine modification. The segment covering Ser-688–Arg-698 has biased composition (polar residues). Over residues Ser-699–Ser-715 the composition is skewed to low complexity. Residues Pro-793–Arg-803 show a composition bias toward polar residues. Phosphoserine occurs at positions 812, 817, and 819. The segment covering Arg-826–Thr-839 has biased composition (low complexity). Residues Ser-857, Ser-861, Ser-915, Ser-920, Ser-929, and Ser-1058 each carry the phosphoserine modification. 3 disordered regions span residues Gln-912–Asn-940, Lys-1050–Ser-1109, and Glu-1127–Glu-1272. The span at Ser-928–Ser-938 shows a compositional bias: low complexity. Phosphothreonine is present on residues Thr-1060 and Thr-1065. Ser-1109 carries the phosphoserine modification. A compositionally biased stretch (basic and acidic residues) spans Glu-1127–Gly-1141. Polar residues predominate over residues Gln-1157–Arg-1172. Positions Ser-1189–Ser-1203 are enriched in low complexity. A compositionally biased stretch (polar residues) spans Ser-1232–Ser-1248. A Phosphothreonine modification is found at Thr-1235. A phosphoserine mark is found at Ser-1237 and Ser-1266. A Death domain is found at Gly-1336 to Glu-1411.

Belongs to the MADD family. Interacts (via death domain) with TNFRSF1A (via death domain). Interacts with PIDD1. Interacts with YWHAZ. Interacts (via death domain) with KIF1B; links the motor KIF1B to Rab3-carrying vesicles in anterograde synaptic vesicle transport. Interacts with KIF1A. Interacts (via uDENN domain) with RAB3A, RAB3B, RAB3C and RAB3D; the GTP-bound form of the Rab proteins is preferred for interaction. As to expression, expressed in the brain.

The protein localises to the cell membrane. It is found in the cytoplasm. Its subcellular location is the cell projection. It localises to the axon. Guanyl-nucleotide exchange factor that regulates small GTPases of the Rab family. Converts GDP-bound inactive form of RAB27A and RAB27B to the GTP-bound active forms. Converts GDP-bound inactive form of RAB3A, RAB3C and RAB3D to the GTP-bound active forms, GTPases involved in synaptic vesicle exocytosis and vesicle secretion. Plays a role in synaptic vesicle formation and in vesicle trafficking at the neuromuscular junction. Involved in up-regulating a post-docking step of synaptic exocytosis in central synapses. Probably by binding to the motor proteins KIF1B and KIF1A, mediates motor-dependent transport of GTP-RAB3A-positive vesicles to the presynaptic nerve terminals. Plays a role in TNFA-mediated activation of the MAPK pathway, including ERK1/2. May link TNFRSF1A with MAP kinase activation. May be involved in the regulation of TNFA-induced apoptosis. The protein is MAP kinase-activating death domain protein of Mus musculus (Mouse).